The following is a 605-amino-acid chain: Cystathionine gamma-synthase-like enzyme iboG1 (605 aa).

Y289 contributes to the substrate binding site. K393 is modified (N6-(pyridoxal phosphate)lysine).

It belongs to the trans-sulfuration enzymes family. Requires pyridoxal 5'-phosphate as cofactor.

It functions in the pathway secondary metabolite biosynthesis. In terms of biological role, cystathionine gamma-synthase-like enzyme; part of the gene cluster that mediates the biosynthesis of the psychoactive metabolites ibotenic acid and muscimol. The first committed step is glutamate hydroxylation by the 2-oxoglutarate-dependent dioxygenase iboH, and the last step is decarboxylation of ibotenic acid to muscimol by the decarboxylase iboD. The order of the intermediate reactions is somewhat ambiguous. IboA likely activates the carboxylic acid at position 5 to introduce an amide bond, and the flavin monooxygenase iboF generates the N-O bond. There are several options for the latter step. One option is that iboF directly hydroxylates the amide nitrogen formed by iboA to produce a hydroxamic acid species. Another option is that iboF hydroxylates an external N-containing compound, whose resulting N-O bond is subsequently introduced into the hydroxyglutamate scaffold. The paralogous PLP-dependent cystathionine gamma-synthase-like enzymes iboG1 and iboG2 are likely involved in substitution of the OH group at position 3 by the O-N moiety. The first cyclic intermediate is most probably tricholomic acid which is likely desaturated to ibotenic acid by the cytochrome P450 monooxygenase iboC. In Amanita muscaria (strain Koide BX008), this protein is Cystathionine gamma-synthase-like enzyme iboG1 (iboG1).